The primary structure comprises 716 residues: Translation initiation factor IF-2 (716 aa).

The segment at 50–137 (FKKSAKPAGN…KPKKELPEKI (88 aa)) is disordered. The segment covering 92-101 (NNVQNTQFNN) has biased composition (low complexity). Over residues 102–118 (KNKKKNNNNKKNKRGKN) the composition is skewed to basic residues. Over residues 125–137 (KQFKPKKELPEKI) the composition is skewed to basic and acidic residues. In terms of domain architecture, tr-type G spans 217–386 (IRPPVVTIMG…LLVSEVEELK (170 aa)). Residues 226 to 233 (GHVDHGKT) are G1. A GTP-binding site is contributed by 226 to 233 (GHVDHGKT). A G2 region spans residues 251–255 (GITQH). The interval 272–275 (DTPG) is G3. GTP is bound by residues 272 to 276 (DTPGH) and 326 to 329 (NKID). The interval 326 to 329 (NKID) is G4. The G5 stretch occupies residues 362-364 (SAL).

It belongs to the TRAFAC class translation factor GTPase superfamily. Classic translation factor GTPase family. IF-2 subfamily.

It localises to the cytoplasm. Functionally, one of the essential components for the initiation of protein synthesis. Protects formylmethionyl-tRNA from spontaneous hydrolysis and promotes its binding to the 30S ribosomal subunits. Also involved in the hydrolysis of GTP during the formation of the 70S ribosomal complex. The sequence is that of Translation initiation factor IF-2 from Bacillus licheniformis (strain ATCC 14580 / DSM 13 / JCM 2505 / CCUG 7422 / NBRC 12200 / NCIMB 9375 / NCTC 10341 / NRRL NRS-1264 / Gibson 46).